Consider the following 767-residue polypeptide: Two-component response regulator-like PRR73 (767 aa).

Positions 1-64 (MGSACEAGTD…EPQQTDEQKE (64 aa)) are disordered. One can recognise a Response regulatory domain in the interval 82 to 200 (RVLLVENDDS…ELKNLWQHVW (119 aa)). The span at 205–214 (SSSGSGSESG) shows a compositional bias: low complexity. Disordered stretches follow at residues 205 to 272 (SSSG…QSSW), 312 to 388 (RWLP…NEPT), 476 to 546 (ASNQ…RGKV), 646 to 701 (ANYS…SGSG), and 727 to 767 (NFGK…DEDR). Positions 238-252 (DNEDDDDNDEDDDDL) are enriched in acidic residues. Composition is skewed to polar residues over residues 263 to 272 (DNGSGTQSSW), 343 to 361 (RNSS…VNPT), and 488 to 497 (CSPQDNSSEA). The segment covering 518-531 (GSNGSSNNNDMGSS) has biased composition (low complexity). The span at 532 to 543 (TKNAITKPSSNR) shows a compositional bias: polar residues. The segment covering 689–700 (GAGGGNGSGSGS) has biased composition (gly residues). Residues 712-754 (REAALNKFRQKRKVRNFGKKVRYQSRKRLAEQRPRIRGQFVRQ) form the CCT domain. Residues 727–738 (NFGKKVRYQSRK) are compositionally biased toward basic residues.

It belongs to the ARR-like family.

It localises to the nucleus. Its function is as follows. Controls photoperiodic flowering response. Seems to be one of the component of the circadian clock. Expression of several members of the ARR-like family is controlled by circadian rhythm. The particular coordinated sequential expression of PRR73, PRR37, PRR95, PRR59 and PPR1 result to circadian waves that may be at the basis of the endogenous circadian clock. In Oryza sativa subsp. japonica (Rice), this protein is Two-component response regulator-like PRR73 (PRR73).